The sequence spans 823 residues: Leucine--tRNA ligase (823 aa).

Positions 42–52 match the 'HIGH' region motif; sequence PYPSGTLHMGH. Positions 575 to 579 match the 'KMSKS' region motif; sequence KMSKS. Lysine 578 provides a ligand contact to ATP.

The protein belongs to the class-I aminoacyl-tRNA synthetase family.

It localises to the cytoplasm. The enzyme catalyses tRNA(Leu) + L-leucine + ATP = L-leucyl-tRNA(Leu) + AMP + diphosphate. The chain is Leucine--tRNA ligase from Legionella pneumophila (strain Paris).